A 188-amino-acid chain; its full sequence is Elongation factor P (188 aa).

Lys34 bears the N6-(3,6-diaminohexanoyl)-5-hydroxylysine mark.

This sequence belongs to the elongation factor P family. In terms of processing, may be beta-lysylated on the epsilon-amino group of Lys-34 by the combined action of EpmA and EpmB, and then hydroxylated on the C5 position of the same residue by EpmC (if this protein is present). Lysylation is critical for the stimulatory effect of EF-P on peptide-bond formation. The lysylation moiety may extend toward the peptidyltransferase center and stabilize the terminal 3-CCA end of the tRNA. Hydroxylation of the C5 position on Lys-34 may allow additional potential stabilizing hydrogen-bond interactions with the P-tRNA.

The protein resides in the cytoplasm. It functions in the pathway protein biosynthesis; polypeptide chain elongation. In terms of biological role, involved in peptide bond synthesis. Alleviates ribosome stalling that occurs when 3 or more consecutive Pro residues or the sequence PPG is present in a protein, possibly by augmenting the peptidyl transferase activity of the ribosome. Modification of Lys-34 is required for alleviation. The protein is Elongation factor P of Stenotrophomonas maltophilia (strain K279a).